The primary structure comprises 196 residues: Ribonuclease HII (196 aa).

One can recognise an RNase H type-2 domain in the interval 9–196 (GLVCGIDEAG…GPVARQLSLL (188 aa)). A divalent metal cation-binding residues include Asp15, Glu16, and Asp107.

This sequence belongs to the RNase HII family. Requires Mn(2+) as cofactor. Mg(2+) serves as cofactor.

It is found in the cytoplasm. It catalyses the reaction Endonucleolytic cleavage to 5'-phosphomonoester.. Endonuclease that specifically degrades the RNA of RNA-DNA hybrids. In Dechloromonas aromatica (strain RCB), this protein is Ribonuclease HII.